A 286-amino-acid chain; its full sequence is Plasma membrane ascorbate-dependent reductase CYBRD1 (286 aa).

The Cytoplasmic segment spans residues 1-7 (MAMEGYW). The chain crosses the membrane as a helical span at residues 8–32 (RFLALLGSALLVGFLSVIFALVWVL). A Cytochrome b561 domain is found at 15–220 (SALLVGFLSV…FGALIFWIVT (206 aa)). At 33-47 (HYREGLGWDGSALEF) the chain is on the extracellular side. Residues 48–69 (NWHPVLMVTGFVFIQGIAIIVY) form a helical membrane-spanning segment. Residues H50, R70, and K79 each coordinate heme b. The Cytoplasmic segment spans residues 70 to 78 (RLPWTWKCS). Residues K79 and K83 each contribute to the L-ascorbate site. Residues 79 to 105 (KLLMKSIHAGLNAVAAILAIISVVAVF) traverse the membrane as a helical segment. H86 is a binding site for heme b. The Extracellular segment spans residues 106 to 118 (ENHNVNNIANMYS). H108 contacts Fe(3+). Heme b is bound by residues 115–118 (NMYS) and H120. The helical transmembrane segment at 119–144 (LHSWVGLIAVICYLLQLLSGFSVFLL) threads the bilayer. Over 145-151 (PWAPLSL) the chain is Cytoplasmic. L-ascorbate is bound at residue R152. Residues 152-179 (RAFLMPIHVYSGIVIFGTVIATALMGLT) traverse the membrane as a helical segment. Heme b-binding residues include H159 and E180. Topologically, residues 180 to 197 (EKLIFSLRDPAYSTFPPE) are extracellular. Residues 198–222 (GVFVNTLGLLILVFGALIFWIVTRP) form a helical membrane-spanning segment. The Cytoplasmic portion of the chain corresponds to 223–286 (QWKRPKEPNS…LDEAGQRSTM (64 aa)). Residue K225 participates in heme b binding. The segment at 229 to 268 (EPNSTILHPNGGTEQGARGSMPAYSGNNMDKSDSELNSEV) is disordered. At S232 the chain carries Phosphoserine. T285 is subject to Phosphothreonine.

As to quaternary structure, homodimer. Heme b is required as a cofactor. As to expression, present in erythrocyte membranes (at protein level). Also expressed in respiratory epithelium.

Its subcellular location is the cell membrane. The protein localises to the apical cell membrane. It carries out the reaction Fe(3+)(out) + L-ascorbate(in) = monodehydro-L-ascorbate radical(in) + Fe(2+)(out) + H(+). The enzyme catalyses Cu(2+)(out) + L-ascorbate(in) = Cu(+)(out) + monodehydro-L-ascorbate radical(in) + H(+). The catalysed reaction is monodehydro-L-ascorbate radical(out) + L-ascorbate(in) = monodehydro-L-ascorbate radical(in) + L-ascorbate(out). Activated by chelators like citrate, malate, and oxalate specially at alkaline pH. Functionally, plasma membrane reductase that uses cytoplasmic ascorbate as an electron donor to reduce extracellular Fe(3+) into Fe(2+). Probably functions in dietary iron absorption at the brush border of duodenal enterocytes by producing Fe(2+), the divalent form of iron that can be transported into enterocytes. It is also able to reduce extracellular monodehydro-L-ascorbate and may be involved in extracellular ascorbate regeneration by erythrocytes in blood. May also act as a ferrireductase in airway epithelial cells. May also function as a cupric transmembrane reductase. In Homo sapiens (Human), this protein is Plasma membrane ascorbate-dependent reductase CYBRD1.